Reading from the N-terminus, the 212-residue chain is Ribosomal RNA small subunit methyltransferase G (212 aa).

S-adenosyl-L-methionine is bound by residues G80, L85, 131–132 (VE), and R146.

It belongs to the methyltransferase superfamily. RNA methyltransferase RsmG family.

Its subcellular location is the cytoplasm. It carries out the reaction guanosine(527) in 16S rRNA + S-adenosyl-L-methionine = N(7)-methylguanosine(527) in 16S rRNA + S-adenosyl-L-homocysteine. Functionally, specifically methylates the N7 position of guanine in position 527 of 16S rRNA. This chain is Ribosomal RNA small subunit methyltransferase G, found in Azoarcus sp. (strain BH72).